Reading from the N-terminus, the 372-residue chain is tRNA pseudouridine synthase D (372 aa).

Asp-85 (nucleophile) is an active-site residue. The 171-residue stretch at 160–330 (GFTNYFGYQR…MQGSRRFMWG (171 aa)) folds into the TRUD domain.

This sequence belongs to the pseudouridine synthase TruD family.

The enzyme catalyses uridine(13) in tRNA = pseudouridine(13) in tRNA. In terms of biological role, responsible for synthesis of pseudouridine from uracil-13 in transfer RNAs. The sequence is that of tRNA pseudouridine synthase D from Campylobacter jejuni (strain RM1221).